The primary structure comprises 157 residues: UPF0225 protein PA1039 (157 aa).

Belongs to the UPF0225 family.

The polypeptide is UPF0225 protein PA1039 (Pseudomonas aeruginosa (strain ATCC 15692 / DSM 22644 / CIP 104116 / JCM 14847 / LMG 12228 / 1C / PRS 101 / PAO1)).